The following is a 660-amino-acid chain: CXXC-type zinc finger protein 1 (660 aa).

At M1 the chain carries N-acetylmethionine. Acidic residues predominate over residues 1 to 14; it reads MEGDGSDLEPPDAG. Residues 1 to 20 are disordered; it reads MEGDGSDLEPPDAGDDSKSE. 2 positions are modified to phosphoserine: S6 and S19. A PHD-type zinc finger spans residues 28–76; it reads YCICRKPDINCFMIGCDNCNEWFHGDCIRITEKMAKAIREWYCRECREK. Positions 91-120 are enriched in basic and acidic residues; that stretch reads ERDGSERAGSEPRDEGGGRKRPASDPELQR. Positions 91–166 are disordered; that stretch reads ERDGSERAGS…QQQQQQQQQI (76 aa). S124 carries the phosphoserine modification. A CXXC-type zinc finger spans residues 164 to 213; that stretch reads QQIKRSARMCGECEACRRTEDCGHCDFCRDMKKFGGPNKIRQKCRLRQCQ. Zn(2+) contacts are provided by C173, C176, C179, C185, C188, C191, C207, and C212. Disordered regions lie at residues 223–287 and 328–375; these read FPSS…SDED and AVKV…DPAS. A Phosphoserine modification is found at S228. The residue at position 231 (T231) is a Phosphothreonine. K254 participates in a covalent cross-link: Glycyl lysine isopeptide (Lys-Gly) (interchain with G-Cter in SUMO2). Over residues 328-338 the composition is skewed to basic residues; that stretch reads AVKVKHVKRRE. A compositionally biased stretch (basic and acidic residues) spans 339–349; it reads KKSEKKKEERY. Over residues 350 to 362 the composition is skewed to basic residues; it reads KRHRQKQKHKDKW. The span at 363–372 shows a compositional bias: basic and acidic residues; it reads KHPERADAKD. Residues 426-479 are a coiled coil; sequence AEEHGKKLLERIRREQQSARTRLQEMERRFHELEAIILRAKQQAVREDEENNEN.

As to quaternary structure, component of the SET1 complex, at least composed of the catalytic subunit (SETD1A or SETD1B), WDR5, WDR82, RBBP5, ASH2L/ASH2, CXXC1/CFP1, HCFC1 and DPY30. Interacts with SETD1A. Interacts with ZNF335. Interacts with PRDM9; this interaction does not link PRDM9-activated recombination hotspot sites with DSB machinery and is not required for the hotspot recognition pathway. Interacts with histone H3K4me3. Expressed in seminiferous tubules and in both germ cells and Sertoli cells. Highly expressed in spermatogonia, weakly expressed in leptonema and zygonema, and then again high expression in pachynema and diplonema, decreasing to undetectable levels in spermatids.

It localises to the nucleus speckle. The protein resides in the nucleus. In terms of biological role, transcriptional activator that exhibits a unique DNA binding specificity for CpG unmethylated motifs with a preference for CpGG. The sequence is that of CXXC-type zinc finger protein 1 (Cxxc1) from Mus musculus (Mouse).